The sequence spans 625 residues: Adenine deaminase 2 (625 aa).

This sequence belongs to the metallo-dependent hydrolases superfamily. Adenine deaminase family. It depends on Mn(2+) as a cofactor.

The catalysed reaction is adenine + H2O + H(+) = hypoxanthine + NH4(+). The polypeptide is Adenine deaminase 2 (Bradyrhizobium diazoefficiens (strain JCM 10833 / BCRC 13528 / IAM 13628 / NBRC 14792 / USDA 110)).